Here is a 158-residue protein sequence, read N- to C-terminus: Transcriptional repressor NrdR (158 aa).

A zinc finger spans residues 3-34 (CPFCGNADTQVVDSRVSEEGDTIRRRRRCLSC). Positions 49 to 139 (PSVVKRNGSR…VYKNFEDIGE (91 aa)) constitute an ATP-cone domain.

The protein belongs to the NrdR family. It depends on Zn(2+) as a cofactor.

Negatively regulates transcription of bacterial ribonucleotide reductase nrd genes and operons by binding to NrdR-boxes. In Bordetella petrii (strain ATCC BAA-461 / DSM 12804 / CCUG 43448), this protein is Transcriptional repressor NrdR.